The chain runs to 130 residues: Holo-[acyl-carrier-protein] synthase (130 aa).

Positions 9 and 58 each coordinate Mg(2+).

This sequence belongs to the P-Pant transferase superfamily. AcpS family. Mg(2+) serves as cofactor.

Its subcellular location is the cytoplasm. The enzyme catalyses apo-[ACP] + CoA = holo-[ACP] + adenosine 3',5'-bisphosphate + H(+). Transfers the 4'-phosphopantetheine moiety from coenzyme A to a Ser of acyl-carrier-protein. The sequence is that of Holo-[acyl-carrier-protein] synthase from Mycobacterium sp. (strain JLS).